A 69-amino-acid chain; its full sequence is Large ribosomal subunit protein bL31 (69 aa).

Zn(2+) contacts are provided by Cys-16, Cys-18, Cys-37, and Cys-40.

It belongs to the bacterial ribosomal protein bL31 family. Type A subfamily. In terms of assembly, part of the 50S ribosomal subunit. Requires Zn(2+) as cofactor.

Functionally, binds the 23S rRNA. The polypeptide is Large ribosomal subunit protein bL31 (Syntrophotalea carbinolica (strain DSM 2380 / NBRC 103641 / GraBd1) (Pelobacter carbinolicus)).